A 479-amino-acid polypeptide reads, in one-letter code: Solute carrier family 7 member 13 (479 aa).

Topologically, residues 1–14 are cytoplasmic; sequence MAMDIEKKIYLKRQ. The helical transmembrane segment at 15 to 35 threads the bilayer; sequence LGYFWGTNFLIINIIGAGIFV. Residues 36-47 lie on the Extracellular side of the membrane; it reads SPKGVLQYSSMN. Residues 48–68 form a helical membrane-spanning segment; it reads VGVSLCVWVFCAVLSMTSTLC. The Cytoplasmic portion of the chain corresponds to 69 to 89; the sequence is AAEIGITFPYTVAHYYFLKRC. A helical transmembrane segment spans residues 90-110; the sequence is FGPFVAFLRLWTSLFTGPGVL. Residues 111–129 lie on the Extracellular side of the membrane; sequence ASQALLLAEYGIQPFYPSC. The chain crosses the membrane as a helical span at residues 130–150; sequence SAPAVPKKCLALAMLWIVGIL. The Cytoplasmic segment spans residues 151–165; sequence NSRGVKELSWLQTVS. A helical membrane pass occupies residues 166–186; that stretch reads MVLKMGILSFISLSGLFLLVT. Over 187-208 the chain is Extracellular; sequence GRKENVRRLQNAFDAEFPEVSR. Residues 209–229 traverse the membrane as a helical segment; sequence LIEAIFQGYFAFSGGGSFTYV. The Cytoplasmic portion of the chain corresponds to 230-242; that stretch reads AGELKEPSKTIPR. Residues 243–263 form a helical membrane-spanning segment; the sequence is CIFTALPLVTVVYLLANLSYL. Over 264–289 the chain is Extracellular; the sequence is TVLSPQELLSSDAVALTWTDRVIPQL. The chain crosses the membrane as a helical span at residues 290–310; the sequence is TWSVPFAISASLFSNLVTSVF. Over 311-338 the chain is Cytoplasmic; sequence ETSRTSYIASRNGQLPLLCSTLNVHSSP. The helical transmembrane segment at 339 to 359 threads the bilayer; the sequence is FIAVLLDVSMGSIAIVLTNLI. A topological domain (extracellular) is located at residue glutamate 360. Residues 361–381 form a helical membrane-spanning segment; that stretch reads LINYLFFVFSIWTVLSVIGIL. The Cytoplasmic portion of the chain corresponds to 382–396; sequence KLRYQEPNLHRPYKV. The chain crosses the membrane as a helical span at residues 397 to 417; that stretch reads FSPFLFITAAISLSMVLIPLI. Residues 418–423 are Extracellular-facing; sequence KSPKMQ. The chain crosses the membrane as a helical span at residues 424–444; sequence YIYVFLFFLGGLLFYVPLIHF. The Cytoplasmic portion of the chain corresponds to 445 to 479; that stretch reads KLKLIWFQKLTCYLQLLFNICIPDVSDEHVAEEES.

The protein belongs to the amino acid-polyamine-organocation (APC) superfamily. In terms of assembly, disulfide-linked heterodimer composed of the catalytic light subunit SLC7A13 and the heavy subunit SLC3A1.

The protein resides in the apical cell membrane. It carries out the reaction L-cystine(out) + L-aspartate(in) = L-cystine(in) + L-aspartate(out). The catalysed reaction is L-cystine(out) = L-cystine(in). It catalyses the reaction L-aspartate(in) + L-glutamate(out) = L-aspartate(out) + L-glutamate(in). The enzyme catalyses L-aspartate(in) + L-glutamine(out) = L-aspartate(out) + L-glutamine(in). It carries out the reaction L-aspartate(in) + L-methionine(out) = L-aspartate(out) + L-methionine(in). The catalysed reaction is L-leucine(out) + L-aspartate(in) = L-leucine(in) + L-aspartate(out). It catalyses the reaction L-valine(out) + L-aspartate(in) = L-valine(in) + L-aspartate(out). The enzyme catalyses L-aspartate(in) + L-phenylalanine(out) = L-aspartate(out) + L-phenylalanine(in). It carries out the reaction L-tyrosine(out) + L-aspartate(in) = L-tyrosine(in) + L-aspartate(out). The catalysed reaction is L-tryptophan(out) + L-aspartate(in) = L-tryptophan(in) + L-aspartate(out). In terms of biological role, associates with SLC3A1/rBAT to form a functional heterodimeric complex that transports anionic and neutral amino acids across the apical plasma membrane of renal epithelium. Preferentially mediates exchange transport, but can also operate via facilitated diffusion. May act as a major transporter for L-cystine in late proximal tubules, ensuring its reabsorption from the luminal fluid in exchange for cytosolic L-glutamate or L-aspartate. The polypeptide is Solute carrier family 7 member 13 (Slc7a13) (Rattus norvegicus (Rat)).